The primary structure comprises 159 residues: Ribosomal RNA large subunit methyltransferase H (159 aa).

S-adenosyl-L-methionine-binding positions include I76, G108, and F127–F132.

It belongs to the RNA methyltransferase RlmH family. Homodimer.

The protein resides in the cytoplasm. It catalyses the reaction pseudouridine(1915) in 23S rRNA + S-adenosyl-L-methionine = N(3)-methylpseudouridine(1915) in 23S rRNA + S-adenosyl-L-homocysteine + H(+). Specifically methylates the pseudouridine at position 1915 (m3Psi1915) in 23S rRNA. The chain is Ribosomal RNA large subunit methyltransferase H from Clostridium botulinum (strain Loch Maree / Type A3).